The chain runs to 363 residues: 3-isopropylmalate dehydrogenase (363 aa).

An NAD(+)-binding site is contributed by 77–90 (GPKWQHLPPDQQPE). Positions 98, 108, 137, and 226 each coordinate substrate. 3 residues coordinate Mg(2+): aspartate 226, aspartate 250, and aspartate 254. Position 284-296 (284-296 (GSAPDIAGKNIAN)) interacts with NAD(+).

It belongs to the isocitrate and isopropylmalate dehydrogenases family. LeuB type 1 subfamily. Homodimer. Mg(2+) is required as a cofactor. Mn(2+) serves as cofactor.

The protein localises to the cytoplasm. It carries out the reaction (2R,3S)-3-isopropylmalate + NAD(+) = 4-methyl-2-oxopentanoate + CO2 + NADH. It participates in amino-acid biosynthesis; L-leucine biosynthesis; L-leucine from 3-methyl-2-oxobutanoate: step 3/4. Functionally, catalyzes the oxidation of 3-carboxy-2-hydroxy-4-methylpentanoate (3-isopropylmalate) to 3-carboxy-4-methyl-2-oxopentanoate. The product decarboxylates to 4-methyl-2 oxopentanoate. In Buchnera aphidicola subsp. Pemphigus spyrothecae, this protein is 3-isopropylmalate dehydrogenase.